A 520-amino-acid polypeptide reads, in one-letter code: NAD(P)H-quinone oxidoreductase subunit 2 (520 aa).

The next 14 membrane-spanning stretches (helical) occupy residues isoleucine 15–leucine 35, tryptophan 42–tryptophan 62, leucine 79–isoleucine 99, glycine 106–valine 126, leucine 132–tyrosine 152, leucine 167–leucine 187, leucine 210–alanine 230, proline 244–isoleucine 264, phenylalanine 280–glutamine 300, methionine 306–threonine 326, isoleucine 334–phenylalanine 354, leucine 378–glycine 398, isoleucine 400–valine 420, and valine 466–phenylalanine 486.

Belongs to the complex I subunit 2 family. NDH-1 can be composed of about 15 different subunits; different subcomplexes with different compositions have been identified which probably have different functions.

It is found in the cellular thylakoid membrane. It catalyses the reaction a plastoquinone + NADH + (n+1) H(+)(in) = a plastoquinol + NAD(+) + n H(+)(out). The catalysed reaction is a plastoquinone + NADPH + (n+1) H(+)(in) = a plastoquinol + NADP(+) + n H(+)(out). NDH-1 shuttles electrons from an unknown electron donor, via FMN and iron-sulfur (Fe-S) centers, to quinones in the respiratory and/or the photosynthetic chain. The immediate electron acceptor for the enzyme in this species is believed to be plastoquinone. Couples the redox reaction to proton translocation, and thus conserves the redox energy in a proton gradient. Cyanobacterial NDH-1 also plays a role in inorganic carbon-concentration. This chain is NAD(P)H-quinone oxidoreductase subunit 2, found in Nostoc sp. (strain PCC 7120 / SAG 25.82 / UTEX 2576).